The sequence spans 939 residues: Collagen-like protein 3 (939 aa).

N-linked (GlcNAc...) asparagine; by host glycosylation is found at asparagine 15, asparagine 35, asparagine 39, and asparagine 82. Residues 84–95 (SGSSGPSGPQGP) show a composition bias toward low complexity. Disordered stretches follow at residues 84–332 (SGSS…DLGN) and 358–697 (SIKG…KGEA). Collagen-like domains lie at 88-147 (GPSG…NGDK), 148-207 (GNKG…KGDK), 211-330 (GNKG…SPDL), 364-423 (GDKG…SGAD), 427-486 (GDKG…KGEK), 493-552 (GESG…KGSK), 564-622 (GDKG…KGDV), and 638-697 (GDKG…KGEA). Composition is skewed to basic and acidic residues over residues 96–110 (KGEK…DKGE), 123–182 (DADK…DPGI), 189–230 (DADK…DIGL), 237–260 (DADK…DIGP), 267–288 (DADK…KGTK), 297–314 (KGDK…DKGE), 360–371 (KGDKGDKGDTGL), 378–416 (DADK…DTGL), 423–491 (DADK…DVGI), 498–527 (DADK…DTGI), 537–552 (KGDK…KGSK), 560–580 (KGDK…DIGI), and 589–684 (KGDK…DKGD). 5 N-linked (GlcNAc...) asparagine; by host glycosylation sites follow: asparagine 788, asparagine 820, asparagine 858, asparagine 919, and asparagine 925. A disordered region spans residues 896–923 (NGETGAPTTDSGTNYGAGGGGGGNGTQG). The segment covering 910 to 923 (YGAGGGGGGNGTQG) has biased composition (gly residues).

Post-translationally, may be hydroxylated on lysine by the viral-encoded procollagen-lysine,2-oxoglutarate 5-dioxygenase.

It is found in the virion. May participate in the formation of a layer of cross-linked glycosylated fibrils at the viral surface thus giving it a hairy-like appearance. In Acanthamoeba polyphaga (Amoeba), this protein is Collagen-like protein 3.